A 180-amino-acid chain; its full sequence is Nucleoside triphosphate/diphosphate phosphatase (180 aa).

Catalysis depends on Arg-26, which acts as the Proton donor. Positions 90, 106, 108, 110, 123, and 126 each coordinate Mg(2+).

It belongs to the Ntdp family. Mg(2+) is required as a cofactor.

The enzyme catalyses a ribonucleoside 5'-triphosphate + H2O = a ribonucleoside 5'-diphosphate + phosphate + H(+). It carries out the reaction a ribonucleoside 5'-diphosphate + H2O = a ribonucleoside 5'-phosphate + phosphate + H(+). Its function is as follows. Has nucleoside phosphatase activity towards nucleoside triphosphates and nucleoside diphosphates. This Staphylococcus aureus (strain Mu3 / ATCC 700698) protein is Nucleoside triphosphate/diphosphate phosphatase.